A 382-amino-acid polypeptide reads, in one-letter code: Beta-1,4-galactosyltransferase 6 (382 aa).

Residues 1 to 15 (MSALKRMMRVSNRSL) are Cytoplasmic-facing. A helical; Signal-anchor for type II membrane protein transmembrane segment spans residues 16–35 (IAFIFFFSLSTSCLYFIYVA). Residues 36–382 (PGIANTYLFM…MPELAPVEDY (347 aa)) lie on the Lumenal side of the membrane. N-linked (GlcNAc...) asparagine glycans are attached at residues asparagine 71, asparagine 75, asparagine 83, asparagine 84, asparagine 99, and asparagine 122. Cysteine 108 and cysteine 152 are disulfide-bonded. Residues 163-167 (PFRNR), 202-204 (FNR), 229-230 (VD), tyrosine 258, and tryptophan 290 contribute to the UDP-alpha-D-galactose site. An intrachain disulfide couples cysteine 223 to cysteine 242. Aspartate 230 contributes to the Mn(2+) binding site. 292-295 (GEDD) contributes to the N-acetyl-D-glucosamine binding site. N-linked (GlcNAc...) asparagine glycosylation occurs at asparagine 307. Position 323 (histidine 323) interacts with Mn(2+). 323–324 (HH) provides a ligand contact to UDP-alpha-D-galactose. Arginine 334 contributes to the N-acetyl-D-glucosamine binding site. Residue asparagine 367 is glycosylated (N-linked (GlcNAc...) asparagine).

The protein belongs to the glycosyltransferase 7 family. Mn(2+) is required as a cofactor. Requires Mg(2+) as cofactor. It depends on Ca(2+) as a cofactor. In terms of tissue distribution, highest expression in brain with lower levels found in lungs, heart, skeletal muscle and kidney. Lowest expression in testis, liver and spleen.

Its subcellular location is the golgi apparatus. The protein localises to the golgi stack membrane. The enzyme catalyses a beta-D-glucosyl-(1&lt;-&gt;1')-N-acylsphing-4-enine + UDP-alpha-D-galactose = a beta-D-Gal-(1-&gt;4)-beta-D-Glc-(1&lt;-&gt;1)-Cer(d18:1(4E)) + UDP + H(+). The protein operates within protein modification; protein glycosylation. It functions in the pathway sphingolipid metabolism. Inhibited by EDTA. Its function is as follows. Catalyzes the synthesis of lactosylceramide (LacCer) via the transfer of galactose from UDP-galactose to glucosylceramide (GlcCer). LacCer is the starting point in the biosynthesis of all gangliosides (membrane-bound glycosphingolipids) which play pivotal roles in the CNS including neuronal maturation and axonal and myelin formation. This Rattus norvegicus (Rat) protein is Beta-1,4-galactosyltransferase 6.